A 170-amino-acid chain; its full sequence is Large ribosomal subunit protein uL10 (170 aa).

Belongs to the universal ribosomal protein uL10 family. Part of the ribosomal stalk of the 50S ribosomal subunit. The N-terminus interacts with L11 and the large rRNA to form the base of the stalk. The C-terminus forms an elongated spine to which L12 dimers bind in a sequential fashion forming a multimeric L10(L12)X complex.

Functionally, forms part of the ribosomal stalk, playing a central role in the interaction of the ribosome with GTP-bound translation factors. This chain is Large ribosomal subunit protein uL10, found in Lactobacillus helveticus (strain DPC 4571).